Here is a 546-residue protein sequence, read N- to C-terminus: Chaperonin GroEL (546 aa).

Residues 29-32 (TLGP), Lys50, 86-90 (DGTTT), Gly414, 477-479 (NAL), and Asp493 each bind ATP.

It belongs to the chaperonin (HSP60) family. As to quaternary structure, forms a cylinder of 14 subunits composed of two heptameric rings stacked back-to-back. Interacts with the co-chaperonin GroES.

It localises to the cytoplasm. It carries out the reaction ATP + H2O + a folded polypeptide = ADP + phosphate + an unfolded polypeptide.. Its function is as follows. Together with its co-chaperonin GroES, plays an essential role in assisting protein folding. The GroEL-GroES system forms a nano-cage that allows encapsulation of the non-native substrate proteins and provides a physical environment optimized to promote and accelerate protein folding. This chain is Chaperonin GroEL, found in Leptospira interrogans serogroup Icterohaemorrhagiae serovar copenhageni (strain Fiocruz L1-130).